A 339-amino-acid chain; its full sequence is Transcription initiation factor IIB (339 aa).

A TFIIB-type zinc finger spans residues 39-70 (EELICPVCGSKNIIKDYERAEIVCEMCGCVLQ). 4 residues coordinate Zn(2+): cysteine 43, cysteine 46, cysteine 62, and cysteine 65. 2 tandem repeats follow at residues 156 to 239 (SELD…SREL) and 250 to 331 (DYVP…ELTE).

This sequence belongs to the TFIIB family.

In terms of biological role, stabilizes TBP binding to an archaeal box-A promoter. Also responsible for recruiting RNA polymerase II to the pre-initiation complex (DNA-TBP-TFIIB). This is Transcription initiation factor IIB from Methanococcus maripaludis (strain C6 / ATCC BAA-1332).